The sequence spans 131 residues: Putative superoxide reductase (131 aa).

Positions 15, 17, 45, 51, 115, and 118 each coordinate Fe cation.

The protein belongs to the desulfoferrodoxin family. The cofactor is Fe cation.

It carries out the reaction reduced [rubredoxin] + superoxide + 2 H(+) = oxidized [rubredoxin] + H2O2. Its function is as follows. Uses electrons from reduced NADP, by way of rubredoxin and an oxidoreductase, to catalyze the reduction of superoxide to hydrogen peroxide. This is Putative superoxide reductase from Thermotoga maritima (strain ATCC 43589 / DSM 3109 / JCM 10099 / NBRC 100826 / MSB8).